The primary structure comprises 36 residues: Photosystem I reaction center subunit VIII (36 aa).

Residues 9–29 form a helical membrane-spanning segment; sequence IFVPLVGLVFPAIAMASLSLY.

It belongs to the PsaI family.

The protein resides in the plastid. Its subcellular location is the chloroplast thylakoid membrane. In terms of biological role, may help in the organization of the PsaL subunit. The polypeptide is Photosystem I reaction center subunit VIII (Phalaenopsis aphrodite subsp. formosana (Moth orchid)).